A 95-amino-acid polypeptide reads, in one-letter code: Putative pterin-4-alpha-carbinolamine dehydratase (95 aa).

The protein belongs to the pterin-4-alpha-carbinolamine dehydratase family.

It carries out the reaction (4aS,6R)-4a-hydroxy-L-erythro-5,6,7,8-tetrahydrobiopterin = (6R)-L-erythro-6,7-dihydrobiopterin + H2O. In Solibacter usitatus (strain Ellin6076), this protein is Putative pterin-4-alpha-carbinolamine dehydratase.